The sequence spans 100 residues: Proline-rich protein 15-like protein (100 aa).

The disordered stretch occupies residues 26–100 (PDTYTQSEGG…LFDDREGKGQ (75 aa)). Positions 53 to 62 (RLEKIVDKNT) are enriched in basic and acidic residues.

It belongs to the PRR15 family.

The polypeptide is Proline-rich protein 15-like protein (PRR15L) (Bos taurus (Bovine)).